We begin with the raw amino-acid sequence, 803 residues long: DNA polymerase 2 (803 aa).

The protein belongs to the DNA polymerase type-B family.

The catalysed reaction is DNA(n) + a 2'-deoxyribonucleoside 5'-triphosphate = DNA(n+1) + diphosphate. The sequence is that of DNA polymerase 2 (polB) from Aeropyrum pernix (strain ATCC 700893 / DSM 11879 / JCM 9820 / NBRC 100138 / K1).